The sequence spans 190 residues: Hypoxanthine/guanine phosphoribosyltransferase (190 aa).

The protein belongs to the purine/pyrimidine phosphoribosyltransferase family. Archaeal HPRT subfamily. Homodimer.

It is found in the cytoplasm. It catalyses the reaction IMP + diphosphate = hypoxanthine + 5-phospho-alpha-D-ribose 1-diphosphate. It carries out the reaction GMP + diphosphate = guanine + 5-phospho-alpha-D-ribose 1-diphosphate. Its pathway is purine metabolism; IMP biosynthesis via salvage pathway; IMP from hypoxanthine: step 1/1. Functionally, catalyzes a salvage reaction resulting in the formation of IMP that is energically less costly than de novo synthesis. The sequence is that of Hypoxanthine/guanine phosphoribosyltransferase from Methanosalsum zhilinae (strain DSM 4017 / NBRC 107636 / OCM 62 / WeN5) (Methanohalophilus zhilinae).